Reading from the N-terminus, the 346-residue chain is Phospholipase A1 (346 aa).

An N-terminal signal peptide occupies residues methionine 1–alanine 26. A propeptide spanning residues glutamate 27–lysine 37 is cleaved from the precursor. 2 N-linked (GlcNAc...) asparagine glycosylation sites follow: asparagine 44 and asparagine 72. Serine 167 functions as the Nucleophile in the catalytic mechanism. The N-linked (GlcNAc...) asparagine glycan is linked to asparagine 185. Active-site charge relay system residues include aspartate 195 and histidine 258.

Belongs to the AB hydrolase superfamily. Lipase family. Contains six disulfide bonds. Post-translationally, N-glycosylated; contains mannose. As to expression, expressed by the venom gland.

Its subcellular location is the secreted. The catalysed reaction is a 1,2-diacyl-sn-glycero-3-phosphocholine + H2O = a 2-acyl-sn-glycero-3-phosphocholine + a fatty acid + H(+). Catalyzes the hydrolysis of phosphatidylcholine with phospholipase A1 activity. Induces hemolytic activity. Acts as an allergen. In Solenopsis invicta (Red imported fire ant), this protein is Phospholipase A1.